We begin with the raw amino-acid sequence, 49 residues long: Large ribosomal subunit protein eL40 (49 aa).

Belongs to the eukaryotic ribosomal protein eL40 family.

This chain is Large ribosomal subunit protein eL40, found in Methanosarcina barkeri (strain Fusaro / DSM 804).